A 332-amino-acid polypeptide reads, in one-letter code: 2,3-diketo-L-gulonate reductase (332 aa).

Histidine 44 (proton donor) is an active-site residue. NAD(+)-binding positions include 168–174 (ITMVDMS), 224–225 (WK), and 304–306 (GHE).

It belongs to the LDH2/MDH2 oxidoreductase family. DlgD subfamily. Homodimer.

It localises to the cytoplasm. The catalysed reaction is 3-dehydro-L-gulonate + NAD(+) = 2,3-dioxo-L-gulonate + NADH + H(+). The enzyme catalyses 3-dehydro-L-gulonate + NADP(+) = 2,3-dioxo-L-gulonate + NADPH + H(+). In terms of biological role, catalyzes the reduction of 2,3-diketo-L-gulonate in the presence of NADH, to form 3-keto-L-gulonate. The protein is 2,3-diketo-L-gulonate reductase of Escherichia coli O17:K52:H18 (strain UMN026 / ExPEC).